Reading from the N-terminus, the 214-residue chain is MKPFTTHTGVIATLNRSNVDTDAIIPKQFLKSIKRTGYGPSAFYDWRYTADGRPDPNFELNHPRFEGRSILVTRNNFGCGSSREHAVWALVQDGYRVIIAPWKEIGEKRLPAFADIFLSNTTKNGMLCIELSETIIDAIFEQTASQPGLQATVDLTVQQLTIHGRIPATYPFQIEEGVREQLINGLDEIALSLKHEADIAAFEARRPTWMDGRD.

It belongs to the LeuD family. LeuD type 1 subfamily. Heterodimer of LeuC and LeuD.

It catalyses the reaction (2R,3S)-3-isopropylmalate = (2S)-2-isopropylmalate. It functions in the pathway amino-acid biosynthesis; L-leucine biosynthesis; L-leucine from 3-methyl-2-oxobutanoate: step 2/4. Functionally, catalyzes the isomerization between 2-isopropylmalate and 3-isopropylmalate, via the formation of 2-isopropylmaleate. The chain is 3-isopropylmalate dehydratase small subunit from Desulforapulum autotrophicum (strain ATCC 43914 / DSM 3382 / VKM B-1955 / HRM2) (Desulfobacterium autotrophicum).